The primary structure comprises 130 residues: MKSLGRHIIAEFYDCNKEILDNVEAIEKSMKEAAYETGATLVNSSFHRFLPYGVSGVVVISESHLTIHTWPEYGYAAVDLFTCGDDVDPWKAFSYLKKILKSQRVHVVEHLRGKYDEIGIPENSPHKMEV.

The active-site Schiff-base intermediate with substrate; via pyruvic acid is serine 63. Serine 63 is subject to Pyruvic acid (Ser); by autocatalysis. Histidine 68 functions as the Proton acceptor; for processing activity in the catalytic mechanism. The active-site Proton donor; for catalytic activity is the cysteine 83.

It belongs to the prokaryotic AdoMetDC family. Type 1 subfamily. As to quaternary structure, heterotetramer of two alpha and two beta chains arranged as a dimer of alpha/beta heterodimers. The cofactor is pyruvate. In terms of processing, is synthesized initially as an inactive proenzyme. Formation of the active enzyme involves a self-maturation process in which the active site pyruvoyl group is generated from an internal serine residue via an autocatalytic post-translational modification. Two non-identical subunits are generated from the proenzyme in this reaction, and the pyruvate is formed at the N-terminus of the alpha chain, which is derived from the carboxyl end of the proenzyme. The post-translation cleavage follows an unusual pathway, termed non-hydrolytic serinolysis, in which the side chain hydroxyl group of the serine supplies its oxygen atom to form the C-terminus of the beta chain, while the remainder of the serine residue undergoes an oxidative deamination to produce ammonia and the pyruvoyl group blocking the N-terminus of the alpha chain.

It carries out the reaction S-adenosyl-L-methionine + H(+) = S-adenosyl 3-(methylsulfanyl)propylamine + CO2. It functions in the pathway amine and polyamine biosynthesis; S-adenosylmethioninamine biosynthesis; S-adenosylmethioninamine from S-adenosyl-L-methionine: step 1/1. Its function is as follows. Catalyzes the decarboxylation of S-adenosylmethionine to S-adenosylmethioninamine (dcAdoMet), the propylamine donor required for the synthesis of the polyamines spermine and spermidine from the diamine putrescine. The chain is S-adenosylmethionine decarboxylase proenzyme from Thermosipho melanesiensis (strain DSM 12029 / CIP 104789 / BI429).